Consider the following 273-residue polypeptide: Large ribosomal subunit protein uL2 (273 aa).

Residues 221–262 are disordered; the sequence is RGTAMNPVDHPHGGGEGRNFGKHPVTPWGVQTKGKKTRHNKR. A compositionally biased stretch (basic residues) spans 253 to 262; it reads KGKKTRHNKR.

It belongs to the universal ribosomal protein uL2 family. As to quaternary structure, part of the 50S ribosomal subunit. Forms a bridge to the 30S subunit in the 70S ribosome.

One of the primary rRNA binding proteins. Required for association of the 30S and 50S subunits to form the 70S ribosome, for tRNA binding and peptide bond formation. It has been suggested to have peptidyltransferase activity; this is somewhat controversial. Makes several contacts with the 16S rRNA in the 70S ribosome. The protein is Large ribosomal subunit protein uL2 of Aggregatibacter actinomycetemcomitans (Actinobacillus actinomycetemcomitans).